A 292-amino-acid chain; its full sequence is Formamidopyrimidine-DNA glycosylase (292 aa).

Pro-2 functions as the Schiff-base intermediate with DNA in the catalytic mechanism. The active-site Proton donor is Glu-3. The Proton donor; for beta-elimination activity role is filled by Lys-61. DNA-binding residues include His-96, Arg-115, and Lys-161. Residues 247–281 (SAYGQEDRPCPRCGTAIRREKFMNRSSFSCPKCQP) form an FPG-type zinc finger. Catalysis depends on Arg-271, which acts as the Proton donor; for delta-elimination activity.

The protein belongs to the FPG family. Monomer. Requires Zn(2+) as cofactor.

The enzyme catalyses Hydrolysis of DNA containing ring-opened 7-methylguanine residues, releasing 2,6-diamino-4-hydroxy-5-(N-methyl)formamidopyrimidine.. It carries out the reaction 2'-deoxyribonucleotide-(2'-deoxyribose 5'-phosphate)-2'-deoxyribonucleotide-DNA = a 3'-end 2'-deoxyribonucleotide-(2,3-dehydro-2,3-deoxyribose 5'-phosphate)-DNA + a 5'-end 5'-phospho-2'-deoxyribonucleoside-DNA + H(+). Functionally, involved in base excision repair of DNA damaged by oxidation or by mutagenic agents. Acts as a DNA glycosylase that recognizes and removes damaged bases. Has a preference for oxidized purines, such as 7,8-dihydro-8-oxoguanine (8-oxoG). Has AP (apurinic/apyrimidinic) lyase activity and introduces nicks in the DNA strand. Cleaves the DNA backbone by beta-delta elimination to generate a single-strand break at the site of the removed base with both 3'- and 5'-phosphates. The sequence is that of Formamidopyrimidine-DNA glycosylase from Rhodococcus jostii (strain RHA1).